The sequence spans 208 residues: 28 kDa heat- and acid-stable phosphoprotein homolog (208 aa).

Disordered regions lie at residues 1-133 and 145-208; these read MAGG…VTKK and LSRR…LGLA. The segment covering 16–44 has biased composition (basic and acidic residues); sequence FGRDYERSKGKISRDRVYDEEDIIKRNQE. Low complexity-rich tracts occupy residues 52–69 and 84–100; these read GSES…NKSK and RNPN…PTTK. Positions 105–121 are enriched in acidic residues; it reads SDSEDDSDKESDSEDEI. Residues 137–206 adopt a coiled-coil conformation; the sequence is INVNAKVELS…EKMAERRRLG (70 aa). Composition is skewed to basic and acidic residues over residues 145–154 and 162–208; these read LSRREKEELA and QNEK…LGLA.

It belongs to the PDAP1 family.

In Dictyostelium discoideum (Social amoeba), this protein is 28 kDa heat- and acid-stable phosphoprotein homolog.